Consider the following 175-residue polypeptide: Small ribosomal subunit protein bS16 (175 aa).

This sequence belongs to the bacterial ribosomal protein bS16 family.

In Cytophaga hutchinsonii (strain ATCC 33406 / DSM 1761 / CIP 103989 / NBRC 15051 / NCIMB 9469 / D465), this protein is Small ribosomal subunit protein bS16.